Here is a 224-residue protein sequence, read N- to C-terminus: Orotate phosphoribosyltransferase (224 aa).

5-phospho-alpha-D-ribose 1-diphosphate-binding positions include K26, 73–74 (YK), R100, K101, K104, H106, and 127–135 (EDVTTSGKS). Positions 131 and 160 each coordinate orotate.

The protein belongs to the purine/pyrimidine phosphoribosyltransferase family. PyrE subfamily. Homodimer. Mg(2+) is required as a cofactor.

The enzyme catalyses orotidine 5'-phosphate + diphosphate = orotate + 5-phospho-alpha-D-ribose 1-diphosphate. It participates in pyrimidine metabolism; UMP biosynthesis via de novo pathway; UMP from orotate: step 1/2. Its function is as follows. Catalyzes the transfer of a ribosyl phosphate group from 5-phosphoribose 1-diphosphate to orotate, leading to the formation of orotidine monophosphate (OMP). This chain is Orotate phosphoribosyltransferase, found in Clostridium botulinum (strain Eklund 17B / Type B).